A 285-amino-acid chain; its full sequence is MRAFIFFLFMLLAMFSASSTQISNTSVFKLEENPKPALILEEKNEANHLGGQRDSNKQGGSYTQGNPGTFRLQGQPGYFNKLEKPRHFKQGRAGVLNQPGILKNSGKSNQKGNPESSNKQENSGSSSQLGRPGISTQQGNPGSSDQQEKPGSFSQKVMVGSSSQQGKPGSSSQHGNLGSSTQKGNLGSSSLQGHLGLSSHQGKPESSGQQGKPGSSSQQGNLGTSGQQEKPGSSSQQGKPGLSSHQGKPGSSSQQGNLHLSSQQGNQGPSSKQRKPGSSSRQGNL.

Residues 1-20 (MRAFIFFLFMLLAMFSASST) form the signal peptide. N-linked (GlcNAc...) asparagine glycosylation occurs at Asn24. Disordered regions lie at residues 47 to 77 (NHLGGQRDSNKQGGSYTQGNPGTFRLQGQPG) and 91 to 285 (GRAG…QGNL). Polar residues-rich tracts occupy residues 57 to 67 (KQGGSYTQGNP) and 105 to 114 (SGKSNQKGNP). A compositionally biased stretch (low complexity) spans 115–128 (ESSNKQENSGSSSQ). Residues 134 to 145 (ISTQQGNPGSSD) show a composition bias toward polar residues. Positions 160 to 173 (GSSSQQGKPGSSSQ) are enriched in low complexity. The span at 174–185 (HGNLGSSTQKGN) shows a compositional bias: polar residues. The segment covering 186 to 220 (LGSSSLQGHLGLSSHQGKPESSGQQGKPGSSSQQG) has biased composition (low complexity). Residues 221 to 285 (NLGTSGQQEK…PGSSSRQGNL (65 aa)) are compositionally biased toward polar residues.

The polypeptide is MARCO-like protein (Homo sapiens (Human)).